The primary structure comprises 314 residues: Chitinase 1 (314 aa).

The signal sequence occupies residues 1–26 (MASVSPSSLLLLFFALLSPLLPLTSA). Positions 27-296 (LVFREYIGSQ…NVFRYEMQAQ (270 aa)) constitute a GH18 domain. Catalysis depends on Glu-151, which acts as the Proton donor.

This sequence belongs to the glycosyl hydrolase 18 family. Chitinase class II subfamily.

It catalyses the reaction Random endo-hydrolysis of N-acetyl-beta-D-glucosaminide (1-&gt;4)-beta-linkages in chitin and chitodextrins.. In terms of biological role, able to cleave glycolchitin. This is Chitinase 1 from Tulipa saxatilis subsp. bakeri (Tulip).